Reading from the N-terminus, the 129-residue chain is Small ribosomal subunit protein uS11 (129 aa).

Belongs to the universal ribosomal protein uS11 family. As to quaternary structure, part of the 30S ribosomal subunit. Interacts with proteins S7 and S18. Binds to IF-3.

Functionally, located on the platform of the 30S subunit, it bridges several disparate RNA helices of the 16S rRNA. Forms part of the Shine-Dalgarno cleft in the 70S ribosome. The polypeptide is Small ribosomal subunit protein uS11 (Salmonella typhi).